The following is a 223-amino-acid chain: Ribosomal RNA small subunit methyltransferase G (223 aa).

S-adenosyl-L-methionine is bound by residues Gly-84, Leu-89, 135–136 (VE), and Arg-150.

Belongs to the methyltransferase superfamily. RNA methyltransferase RsmG family.

The protein resides in the cytoplasm. It catalyses the reaction guanosine(527) in 16S rRNA + S-adenosyl-L-methionine = N(7)-methylguanosine(527) in 16S rRNA + S-adenosyl-L-homocysteine. Functionally, specifically methylates the N7 position of guanine in position 527 of 16S rRNA. The sequence is that of Ribosomal RNA small subunit methyltransferase G from Saccharophagus degradans (strain 2-40 / ATCC 43961 / DSM 17024).